The primary structure comprises 84 residues: Putative membrane protein insertion efficiency factor (84 aa).

The protein belongs to the UPF0161 family.

It is found in the cell inner membrane. Its function is as follows. Could be involved in insertion of integral membrane proteins into the membrane. The protein is Putative membrane protein insertion efficiency factor of Shewanella baltica (strain OS195).